The primary structure comprises 429 residues: Phosphoglucosamine mutase (429 aa).

Catalysis depends on Ser-96, which acts as the Phosphoserine intermediate. Residues Ser-96, Asp-230, Asp-232, and Asp-234 each coordinate Mg(2+). At Ser-96 the chain carries Phosphoserine.

The protein belongs to the phosphohexose mutase family. The cofactor is Mg(2+). In terms of processing, activated by phosphorylation.

It carries out the reaction alpha-D-glucosamine 1-phosphate = D-glucosamine 6-phosphate. Catalyzes the conversion of glucosamine-6-phosphate to glucosamine-1-phosphate. This chain is Phosphoglucosamine mutase, found in Thermotoga maritima (strain ATCC 43589 / DSM 3109 / JCM 10099 / NBRC 100826 / MSB8).